A 113-amino-acid chain; its full sequence is Large ribosomal subunit protein uL22 (113 aa).

This sequence belongs to the universal ribosomal protein uL22 family. In terms of assembly, part of the 50S ribosomal subunit.

This protein binds specifically to 23S rRNA; its binding is stimulated by other ribosomal proteins, e.g. L4, L17, and L20. It is important during the early stages of 50S assembly. It makes multiple contacts with different domains of the 23S rRNA in the assembled 50S subunit and ribosome. Functionally, the globular domain of the protein is located near the polypeptide exit tunnel on the outside of the subunit, while an extended beta-hairpin is found that lines the wall of the exit tunnel in the center of the 70S ribosome. The chain is Large ribosomal subunit protein uL22 from Geobacillus sp. (strain WCH70).